Consider the following 116-residue polypeptide: uncharacterized protein (116 aa).

This is an uncharacterized protein from Acheta domesticus (House cricket).